The chain runs to 315 residues: Ribose-phosphate pyrophosphokinase (315 aa).

Residues aspartate 37–glutamate 39 and arginine 96–glutamine 97 each bind ATP. Histidine 131 and aspartate 170 together coordinate Mg(2+). The active site involves lysine 194. D-ribose 5-phosphate-binding positions include arginine 196, aspartate 220, and aspartate 224–threonine 228.

Belongs to the ribose-phosphate pyrophosphokinase family. Class I subfamily. As to quaternary structure, homohexamer. Mg(2+) serves as cofactor.

Its subcellular location is the cytoplasm. It carries out the reaction D-ribose 5-phosphate + ATP = 5-phospho-alpha-D-ribose 1-diphosphate + AMP + H(+). The protein operates within metabolic intermediate biosynthesis; 5-phospho-alpha-D-ribose 1-diphosphate biosynthesis; 5-phospho-alpha-D-ribose 1-diphosphate from D-ribose 5-phosphate (route I): step 1/1. In terms of biological role, involved in the biosynthesis of the central metabolite phospho-alpha-D-ribosyl-1-pyrophosphate (PRPP) via the transfer of pyrophosphoryl group from ATP to 1-hydroxyl of ribose-5-phosphate (Rib-5-P). The sequence is that of Ribose-phosphate pyrophosphokinase from Buchnera aphidicola subsp. Schizaphis graminum (strain Sg).